We begin with the raw amino-acid sequence, 431 residues long: MTLNRRDFIKTSGAAVAAVGILGFPHLAFGAGRKVVVVGGGTGGATAAKYIKLADPSIEVTLIEPNTDYYTCYLSNEVIGGDRKLESIKHGYDGLRAHGIQVVHDSATGIDPDKKLVKTAGGAEFGYDRCVVAPGIELIYDKIEGYSEEAAAKLPHAWKAGEQTAILRKQLEDMADGGTVVIAPPAAPFRCPPGPYERASQVAYYLKAHKPKSKVIILDSSQTFSKQSQFSKGWERLYGFGTENAMIEWHPGPDSAVVKVDGGEMMVETAFGDEFKADVINLIPPQRAGKIAQIAGLTNDAGWCPVDIKTFESSIHKGIHVIGDACIANPMPKSGYSANSQGKVAAAAVVALLKGEEPGTPSYLNTCYSILAPAYGISVAAIYRPNADGSAIESVPDSGGVTPVDAPDWVLEREVQYAYSWYNNIVHDTFG.

A signal peptide (tat-type signal) is located at residues 1–30 (MTLNRRDFIKTSGAAVAAVGILGFPHLAFG). Residue 70-76 (YTCYLSN) coordinates FAD. Cys-191 and Cys-367 are oxidised to a cystine.

As to quaternary structure, dimer of one cytochrome and one flavoprotein. Predicted to be exported by the Tat system. The position of the signal peptide cleavage has been experimentally proven.

It is found in the periplasm. It carries out the reaction hydrogen sulfide + 2 Fe(III)-[cytochrome c] = sulfur + 2 Fe(II)-[cytochrome c] + H(+). This is Sulfide dehydrogenase [flavocytochrome c] flavoprotein chain (fccB) from Allochromatium vinosum (strain ATCC 17899 / DSM 180 / NBRC 103801 / NCIMB 10441 / D) (Chromatium vinosum).